A 201-amino-acid chain; its full sequence is MDLTLLWVLLPLVTTAWGQYGGYGYPYQQYQDYGDDGWVNLNRQGFSYQCPHGQVVVAVRSIFSKKEGSDRQWNYACMPTPQSLGEPTECWWEEINRAGMEWYQKCSNNGLVAGFQSRYFESVLDREWQFYCCRYSKRCPYSCWMTTEYPSHYGEDMDMISYDYDFYMRGATTTFSAVERDRQWKFIMCRMTDYDCEFENV.

The signal sequence occupies residues 1-18 (MDLTLLWVLLPLVTTAWG). Glutamine 19 is modified (pyrrolidone carboxylic acid). The segment at 19 to 186 (QYGGYGYPYQ…AVERDRQWKF (168 aa)) is 2 X 53-55 AA tandem repeats. Tyrosine 23 bears the Sulfotyrosine mark. Repeat copies occupy residues 26–79 (PYQQ…ACMP), 70–75 (DRQWNY), 80–135 (TPQS…CCRY), and 125–130 (DREWQF). Disulfide bonds link cysteine 50-cysteine 77, cysteine 90-cysteine 132, cysteine 106-cysteine 133, cysteine 139-cysteine 196, and cysteine 143-cysteine 189. The tract at residues 70–186 (DRQWNYACMP…AVERDRQWKF (117 aa)) is 3 X 6 AA tandem repeats of D-R-[EQ]-W-[NQK]-[FY]. Sulfotyrosine is present on residues tyrosine 162, tyrosine 164, and tyrosine 167. The stretch at 181-186 (DRQWKF) is one 2-3 repeat. Tyrosine 194 is modified (sulfotyrosine).

This sequence belongs to the dermatopontin family. As to quaternary structure, interacts with TGFB1, DCN and collagen. Post-translationally, sulfated on tyrosine residue(s).

Its subcellular location is the secreted. The protein localises to the extracellular space. The protein resides in the extracellular matrix. Seems to mediate adhesion by cell surface integrin binding. May serve as a communication link between the dermal fibroblast cell surface and its extracellular matrix environment. Enhances TGFB1 activity. Inhibits cell proliferation. Accelerates collagen fibril formation, and stabilizes collagen fibrils against low-temperature dissociation. This is Dermatopontin (Dpt) from Mus musculus (Mouse).